Reading from the N-terminus, the 196-residue chain is Pyridoxal 5'-phosphate synthase subunit PdxT (196 aa).

46–48 (GES) contacts L-glutamine. The active-site Nucleophile is Cys78. Residues Arg105 and 133–134 (IR) contribute to the L-glutamine site. Residues His169 and Glu171 each act as charge relay system in the active site.

Belongs to the glutaminase PdxT/SNO family. In terms of assembly, in the presence of PdxS, forms a dodecamer of heterodimers. Only shows activity in the heterodimer.

It carries out the reaction aldehydo-D-ribose 5-phosphate + D-glyceraldehyde 3-phosphate + L-glutamine = pyridoxal 5'-phosphate + L-glutamate + phosphate + 3 H2O + H(+). The catalysed reaction is L-glutamine + H2O = L-glutamate + NH4(+). Its pathway is cofactor biosynthesis; pyridoxal 5'-phosphate biosynthesis. Functionally, catalyzes the hydrolysis of glutamine to glutamate and ammonia as part of the biosynthesis of pyridoxal 5'-phosphate. The resulting ammonia molecule is channeled to the active site of PdxS. This Geobacillus kaustophilus (strain HTA426) protein is Pyridoxal 5'-phosphate synthase subunit PdxT.